A 550-amino-acid chain; its full sequence is Chaperonin GroEL (550 aa).

Residues 30-33, Lys51, 87-91, Gly415, 480-482, and Asp496 contribute to the ATP site; these read TLGP, DGTTT, and NAA.

This sequence belongs to the chaperonin (HSP60) family. As to quaternary structure, forms a cylinder of 14 subunits composed of two heptameric rings stacked back-to-back. Interacts with the co-chaperonin GroES.

The protein localises to the cytoplasm. The catalysed reaction is ATP + H2O + a folded polypeptide = ADP + phosphate + an unfolded polypeptide.. In terms of biological role, together with its co-chaperonin GroES, plays an essential role in assisting protein folding. The GroEL-GroES system forms a nano-cage that allows encapsulation of the non-native substrate proteins and provides a physical environment optimized to promote and accelerate protein folding. The chain is Chaperonin GroEL from Variovorax paradoxus (strain S110).